Here is a 371-residue protein sequence, read N- to C-terminus: Alanine dehydrogenase (371 aa).

Positions 15 and 75 each coordinate substrate. His96 serves as the catalytic Proton donor/acceptor. NAD(+) contacts are provided by residues Ser134, 178–179, Asp198, Lys203, Ser220, 239–240, 267–270, Arg279, and 298–301; these read TA, VL, IAID, and VANM. The Proton donor/acceptor role is filled by Asp270. Mg(2+) contacts are provided by Glu323 and His327.

Belongs to the AlaDH/PNT family. As to quaternary structure, homohexamer. Trimer of dimers. It depends on Mg(2+) as a cofactor.

The protein resides in the secreted. It carries out the reaction L-alanine + NAD(+) + H2O = pyruvate + NH4(+) + NADH + H(+). Its pathway is amino-acid degradation; L-alanine degradation via dehydrogenase pathway; NH(3) and pyruvate from L-alanine: step 1/1. With respect to regulation, inhibited by CuSO(4) and ZnCl(2). In terms of biological role, catalyzes the reversible reductive amination of pyruvate to L-alanine. However, since the physiological environment of M.tuberculosis has a neutral pH, it can be assumed that the enzyme catalyzes exclusively the formation of L-alanine. May play a role in cell wall synthesis as L-alanine is an important constituent of the peptidoglycan layer. The sequence is that of Alanine dehydrogenase (ald) from Mycobacterium tuberculosis (strain ATCC 25618 / H37Rv).